We begin with the raw amino-acid sequence, 461 residues long: ERBB receptor feedback inhibitor 1 (461 aa).

Ser-2 is modified (N-acetylserine). A phosphothreonine mark is found at Thr-126 and Thr-130. A disordered region spans residues 228–353; it reads QNRVVPDPNP…VMPPTQSFAP (126 aa). Phosphoserine occurs at positions 251 and 272. Residues 265–274 are compositionally biased toward polar residues; sequence SSCTHRASPS. Residues 283 to 292 are compositionally biased toward pro residues; sequence PPRVPIPPRP. Residue Ser-301 is modified to Phosphoserine. Residues 311-324 are compositionally biased toward basic and acidic residues; the sequence is DEDRPPKVPPREPL. Residues 325–336 are compositionally biased toward polar residues; it reads SRSNSRTPSPKS. Residues 333 to 362 are interaction with EGFR and ERBB2 and regulation of EGFR activation; sequence SPKSLPSYLNGVMPPTQSFAPDPKYVSSKA. Ser-460 is subject to Phosphoserine.

Belongs to the MIG6 family. Interacts with EGFR. Interacts with ERBB2. In terms of tissue distribution, detected in lung, in airway epithelial cells and alveolar type 2 cells (at protein level). Detected in uterus stroma, luminal epithelium and glandular epithelium.

Its subcellular location is the cytoplasm. The protein localises to the cell membrane. It localises to the nucleus. Its function is as follows. Negative regulator of EGFR signaling in skin morphogenesis. Acts as a negative regulator for several EGFR family members, including ERBB2, ERBB3 and ERBB4. Inhibits EGFR catalytic activity by interfering with its dimerization. Inhibits autophosphorylation of EGFR, ERBB2 and ERBB4. Important for normal keratinocyte proliferation and differentiation. Plays a role in modulating the response to steroid hormones in the uterus. Required for normal response to progesterone in the uterus and for fertility. Mediates epithelial estrogen responses in the uterus by regulating ESR1 levels and activation. Important for regulation of endometrium cell proliferation. Important for normal prenatal and perinatal lung development. This Mus musculus (Mouse) protein is ERBB receptor feedback inhibitor 1 (Errfi1).